The chain runs to 459 residues: Putrescine aminotransferase (459 aa).

Pyridoxal 5'-phosphate contacts are provided by residues 150–151 and glutamine 274; that span reads GT. Lysine 300 bears the N6-(pyridoxal phosphate)lysine mark. Threonine 332 serves as a coordination point for pyridoxal 5'-phosphate.

Belongs to the class-III pyridoxal-phosphate-dependent aminotransferase family. Putrescine aminotransferase subfamily. Pyridoxal 5'-phosphate serves as cofactor.

The catalysed reaction is an alkane-alpha,omega-diamine + 2-oxoglutarate = an omega-aminoaldehyde + L-glutamate. It carries out the reaction putrescine + 2-oxoglutarate = 1-pyrroline + L-glutamate + H2O. The enzyme catalyses cadaverine + 2-oxoglutarate = 5-aminopentanal + L-glutamate. The protein operates within amine and polyamine degradation; putrescine degradation; 4-aminobutanal from putrescine (transaminase route): step 1/1. In terms of biological role, catalyzes the aminotransferase reaction from putrescine to 2-oxoglutarate, leading to glutamate and 4-aminobutanal, which spontaneously cyclizes to form 1-pyrroline. This is the first step in one of two pathways for putrescine degradation, where putrescine is converted into 4-aminobutanoate (gamma-aminobutyrate or GABA) via 4-aminobutanal. Also functions as a cadaverine transaminase in a a L-lysine degradation pathway to succinate that proceeds via cadaverine, glutarate and L-2-hydroxyglutarate. This chain is Putrescine aminotransferase, found in Shigella boydii serotype 4 (strain Sb227).